We begin with the raw amino-acid sequence, 82 residues long: MAHSVTPLQWVAVKLIRLYQLIISPLLGQRCRFTPTCSQFAIEAIRLHGFIKGVWLASKRLLKCHPLSEGGYDPVPQPKRRN.

It belongs to the UPF0161 family.

Its subcellular location is the cell inner membrane. In terms of biological role, could be involved in insertion of integral membrane proteins into the membrane. In Aeromonas salmonicida (strain A449), this protein is Putative membrane protein insertion efficiency factor.